A 398-amino-acid polypeptide reads, in one-letter code: Cell division protein FtsZ (398 aa).

GTP is bound by residues 21-25, 108-110, Glu139, Arg143, and Asp187; these read GGGGN and GTG.

It belongs to the FtsZ family. Homodimer. Polymerizes to form a dynamic ring structure in a strictly GTP-dependent manner. Interacts directly with several other division proteins.

It is found in the cytoplasm. In terms of biological role, essential cell division protein that forms a contractile ring structure (Z ring) at the future cell division site. The regulation of the ring assembly controls the timing and the location of cell division. One of the functions of the FtsZ ring is to recruit other cell division proteins to the septum to produce a new cell wall between the dividing cells. Binds GTP and shows GTPase activity. The polypeptide is Cell division protein FtsZ (Pseudomonas putida (strain ATCC 47054 / DSM 6125 / CFBP 8728 / NCIMB 11950 / KT2440)).